The following is a 106-amino-acid chain: Large ribosomal subunit protein uL24 (106 aa).

It belongs to the universal ribosomal protein uL24 family. Part of the 50S ribosomal subunit.

Its function is as follows. One of two assembly initiator proteins, it binds directly to the 5'-end of the 23S rRNA, where it nucleates assembly of the 50S subunit. In terms of biological role, one of the proteins that surrounds the polypeptide exit tunnel on the outside of the subunit. This is Large ribosomal subunit protein uL24 from Acidiphilium cryptum (strain JF-5).